Here is a 189-residue protein sequence, read N- to C-terminus: Inosine triphosphate pyrophosphatase (189 aa).

Residue 8–13 (TGNANK) participates in ITP binding. Glu39 contacts Mg(2+). ITP is bound by residues Lys51, 67-68 (DT), Lys84, 143-146 (FGWD), Lys167, and 172-173 (HR).

It belongs to the HAM1 NTPase family. In terms of assembly, homodimer. Mg(2+) is required as a cofactor. Requires Mn(2+) as cofactor.

The protein localises to the cytoplasm. The protein resides in the nucleus. The enzyme catalyses ITP + H2O = IMP + diphosphate + H(+). It catalyses the reaction dITP + H2O = dIMP + diphosphate + H(+). The catalysed reaction is XTP + H2O = XMP + diphosphate + H(+). Its function is as follows. Pyrophosphatase that hydrolyzes non-canonical purine nucleotides such as inosine triphosphate (ITP), deoxyinosine triphosphate (dITP) or xanthosine 5'-triphosphate (XTP) to their respective monophosphate derivatives. The enzyme does not distinguish between the deoxy- and ribose forms. Probably excludes non-canonical purines from RNA and DNA precursor pools, thus preventing their incorporation into RNA and DNA and avoiding chromosomal lesions. The sequence is that of Inosine triphosphate pyrophosphatase from Cryptococcus neoformans var. neoformans serotype D (strain JEC21 / ATCC MYA-565) (Filobasidiella neoformans).